Here is a 350-residue protein sequence, read N- to C-terminus: UDP-rhamnose/UDP-galactose transporter 3 (350 aa).

10 consecutive transmembrane segments (helical) span residues 12 to 32 (AVSDMGAWAMNVISSVGIIMA), 41 to 61 (GFAFSFATTLTGFHFALTALV), 81 to 101 (LIWFSIVANVSIAAMNFSLML), 104 to 124 (VGFYQISKLSMIPVVCVMEWI), 133 to 153 (EVKISVVVVVVGVGICTVTDV), 160 to 180 (FICACVAIFSSSLQQILIGSL), 200 to 220 (AFSLLVVGPLVDYLLSGKFIM), 224 to 244 (MSSGCFLFILLSCGLAVFCNI), 257 to 277 (SFQVIGHMKTVCILTLGWLLF), and 286 to 306 (VAGMIVAIVGMVIYSWAMELE).

Belongs to the TPT transporter family. TPT (TC 2.A.7.9) subfamily.

Its subcellular location is the golgi apparatus membrane. Nucleotide-sugar transporter that transports UDP-rhamnose or UDP-galactose and UMP in a strict counter-exchange mode. This chain is UDP-rhamnose/UDP-galactose transporter 3, found in Arabidopsis thaliana (Mouse-ear cress).